A 511-amino-acid chain; its full sequence is Exodeoxyribonuclease 7 large subunit (511 aa).

It belongs to the XseA family. Heterooligomer composed of large and small subunits.

The protein localises to the cytoplasm. The catalysed reaction is Exonucleolytic cleavage in either 5'- to 3'- or 3'- to 5'-direction to yield nucleoside 5'-phosphates.. Its function is as follows. Bidirectionally degrades single-stranded DNA into large acid-insoluble oligonucleotides, which are then degraded further into small acid-soluble oligonucleotides. In Brucella melitensis biotype 2 (strain ATCC 23457), this protein is Exodeoxyribonuclease 7 large subunit.